The following is a 487-amino-acid chain: Betaine aldehyde dehydrogenase (487 aa).

K(+)-binding residues include I27 and D93. Residue 149–151 (GAW) participates in NAD(+) binding. Catalysis depends on K161, which acts as the Charge relay system. NAD(+)-binding positions include 175 to 178 (KPSE) and 228 to 231 (SVPT). Residue E249 is the Proton acceptor of the active site. NAD(+) contacts are provided by G251, C283, and E384. C283 (nucleophile) is an active-site residue. C283 is modified (cysteine sulfenic acid (-SOH)). K(+) contacts are provided by K454 and G457. E461 (charge relay system) is an active-site residue.

It belongs to the aldehyde dehydrogenase family. As to quaternary structure, dimer of dimers. K(+) is required as a cofactor.

It catalyses the reaction betaine aldehyde + NAD(+) + H2O = glycine betaine + NADH + 2 H(+). Its pathway is amine and polyamine biosynthesis; betaine biosynthesis via choline pathway; betaine from betaine aldehyde: step 1/1. In terms of biological role, involved in the biosynthesis of the osmoprotectant glycine betaine. Catalyzes the irreversible oxidation of betaine aldehyde to the corresponding acid. This is Betaine aldehyde dehydrogenase from Mesorhizobium japonicum (strain LMG 29417 / CECT 9101 / MAFF 303099) (Mesorhizobium loti (strain MAFF 303099)).